Here is a 588-residue protein sequence, read N- to C-terminus: Retrograde regulation protein 2 (588 aa).

This sequence belongs to the GppA/Ppx family.

In terms of biological role, required for a novel path of interorganelle communication between mitochondria, peroxisomes and the nucleus, thereby maintaining a functional metabolic interaction between the tricarboxylic acid and glyoxylate cycles. In particular, required for the retrograde expression of the peroxisomal isoform of citrate synthase, CIT2. This is Retrograde regulation protein 2 (RTG2) from Saccharomyces cerevisiae (strain ATCC 204508 / S288c) (Baker's yeast).